The sequence spans 375 residues: Serine protease 23 (375 aa).

The signal sequence occupies residues 1 to 23 (MAGTPGHPIFLLLLLRAIGQVSP). Asn-93 carries N-linked (GlcNAc...) asparagine glycosylation. Cysteines 153 and 169 form a disulfide. Residue His-168 is the Charge relay system of the active site. N-linked (GlcNAc...) asparagine glycosylation occurs at Asn-199. Catalysis depends on charge relay system residues Asp-232 and Ser-308.

This sequence belongs to the peptidase S1 family.

The protein resides in the secreted. The polypeptide is Serine protease 23 (PRSS23) (Bos taurus (Bovine)).